We begin with the raw amino-acid sequence, 740 residues long: E3 ubiquitin-protein ligase DTX3L (740 aa).

The residue at position 2 (A2) is an N-acetylalanine. S9 carries the phosphoserine modification. Disordered stretches follow at residues 96-119, 195-231, and 524-551; these read NTRP…MHQH, SEQK…KAEQ, and HETP…SEAS. 2 stretches are compositionally biased toward polar residues: residues 98–111 and 195–205; these read RPQI…QAET and SEQKQQFSPSM. Phosphoserine is present on S202. The segment covering 206-218 has biased composition (basic and acidic residues); that stretch reads TERKPLSQQERDS. A phosphoserine mark is found at S221, S532, and S539. Residues 561-600 form an RING-type zinc finger; that stretch reads CVICMDTISNKKVLPKCKHEFCAPCINKAMSYKPICPTCQ.

The protein belongs to the Deltex family. Homodimer and heterodimer. Can heterodimerize with DTX1, enhancing its ubiquitin ligase activity in vitro. Interacts (via N-terminus) with ADP ribosyltransferase PARP9/BAL1 (via PARP catalytic domain) forming a stable complex; the interaction is required to activate PARP9 but is dispensable for DTX3L catalytic activity. Forms a complex with STAT1 and PARP9 independently of IFNB1 or IFNG-mediated STAT1 'Tyr-701' phosphorylation. Found in a complex with PARP9, STAT1 and H2BC9. Found in a complex with E3 ligase ITCH and ESCRT-0 components HGS and STAM. Interacts (via C-terminus) with ITCH; the interaction is increased upon CXCL12 stimulation and inhibits ITCH catalytic activity; the interaction is direct. Interacts with HGS and STAM; the interaction brings together HGS and STAM and promotes their recruitment to early endosomes. As to quaternary structure, (Microbial infection) Interacts with encephalomyocarditis virus (EMCV) C3 protease; the interaction results in C3 protease 'Lys-48'-linked ubiquitination. In terms of assembly, (Microbial infection) Interacts with human rhinovirus (HRV) C3 protease; the interaction results in C3 protease 'Lys-48'-linked ubiquitination. Autoubiquitinated.

Its subcellular location is the cytoplasm. It is found in the nucleus. The protein localises to the early endosome membrane. The protein resides in the lysosome membrane. It catalyses the reaction S-ubiquitinyl-[E2 ubiquitin-conjugating enzyme]-L-cysteine + [acceptor protein]-L-lysine = [E2 ubiquitin-conjugating enzyme]-L-cysteine + N(6)-ubiquitinyl-[acceptor protein]-L-lysine.. The protein operates within protein modification; protein ubiquitination. Its activity is regulated as follows. Binding to PARP9 enhances DTX3L catalytic activity. E3 ubiquitin-protein ligase which, in association with ADP-ribosyltransferase PARP9, plays a role in DNA damage repair and in interferon-mediated antiviral responses. Monoubiquitinates several histones, including histone H2A, H2B, H3 and H4. In response to DNA damage, mediates monoubiquitination of 'Lys-91' of histone H4 (H4K91ub1). The exact role of H4K91ub1 in DNA damage response is still unclear but it may function as a licensing signal for additional histone H4 post-translational modifications such as H4 'Lys-20' methylation (H4K20me). PARP1-dependent PARP9-DTX3L-mediated ubiquitination promotes the rapid and specific recruitment of 53BP1/TP53BP1, UIMC1/RAP80, and BRCA1 to DNA damage sites. By monoubiquitinating histone H2B H2BC9/H2BJ and thereby promoting chromatin remodeling, positively regulates STAT1-dependent interferon-stimulated gene transcription and thus STAT1-mediated control of viral replication. Independently of its catalytic activity, promotes the sorting of chemokine receptor CXCR4 from early endosome to lysosome following CXCL12 stimulation by reducing E3 ligase ITCH activity and thus ITCH-mediated ubiquitination of endosomal sorting complex required for transport ESCRT-0 components HGS and STAM. In addition, required for the recruitment of HGS and STAM to early endosomes. In association with PARP9, plays a role in antiviral responses by mediating 'Lys-48'-linked ubiquitination of encephalomyocarditis virus (EMCV) and human rhinovirus (HRV) C3 proteases and thus promoting their proteasomal-mediated degradation. The chain is E3 ubiquitin-protein ligase DTX3L (DTX3L) from Homo sapiens (Human).